The primary structure comprises 130 residues: Small ribosomal subunit protein uS11c (130 aa).

This sequence belongs to the universal ribosomal protein uS11 family. Part of the 30S ribosomal subunit.

Its subcellular location is the plastid. It is found in the chloroplast. This chain is Small ribosomal subunit protein uS11c, found in Stigeoclonium helveticum (Green alga).